The chain runs to 260 residues: Indole-3-glycerol phosphate synthase (260 aa).

It belongs to the TrpC family.

It catalyses the reaction 1-(2-carboxyphenylamino)-1-deoxy-D-ribulose 5-phosphate + H(+) = (1S,2R)-1-C-(indol-3-yl)glycerol 3-phosphate + CO2 + H2O. Its pathway is amino-acid biosynthesis; L-tryptophan biosynthesis; L-tryptophan from chorismate: step 4/5. This chain is Indole-3-glycerol phosphate synthase, found in Staphylococcus aureus (strain MSSA476).